Reading from the N-terminus, the 404-residue chain is Cysteine desulfurase IscS (404 aa).

Pyridoxal 5'-phosphate-binding positions include 75–76 (AT), N155, Q183, and 203–205 (SAH). Position 206 is an N6-(pyridoxal phosphate)lysine (K206). T243 serves as a coordination point for pyridoxal 5'-phosphate. C328 functions as the Cysteine persulfide intermediate in the catalytic mechanism. Residue C328 participates in [2Fe-2S] cluster binding.

Belongs to the class-V pyridoxal-phosphate-dependent aminotransferase family. NifS/IscS subfamily. Homodimer. Forms a heterotetramer with IscU, interacts with other sulfur acceptors. The cofactor is pyridoxal 5'-phosphate.

The protein localises to the cytoplasm. The enzyme catalyses (sulfur carrier)-H + L-cysteine = (sulfur carrier)-SH + L-alanine. Its pathway is cofactor biosynthesis; iron-sulfur cluster biosynthesis. In terms of biological role, master enzyme that delivers sulfur to a number of partners involved in Fe-S cluster assembly, tRNA modification or cofactor biosynthesis. Catalyzes the removal of elemental sulfur atoms from cysteine to produce alanine. Functions as a sulfur delivery protein for Fe-S cluster synthesis onto IscU, an Fe-S scaffold assembly protein, as well as other S acceptor proteins. This is Cysteine desulfurase IscS from Pseudomonas syringae pv. syringae (strain B728a).